The chain runs to 739 residues: Sulfate transporter (739 aa).

The tract at residues 1-44 (MSSENKEQHNLSPRDLPEEAYGFPPELPLGAQRGSSTDLRQFEP) is disordered. Position 12 is a phosphoserine (Ser-12). 2 helical membrane passes run 112–132 (MMSG…YSLL) and 137–157 (PIYG…FGTS). Asn-205 is a glycosylation site (N-linked (GlcNAc...) asparagine). Transmembrane regions (helical) follow at residues 227–247 (FMAG…VSVY) and 255–275 (GFVT…LLGL). N-linked (GlcNAc...) asparagine glycosylation is present at Asn-357. A run of 4 helical transmembrane segments spans residues 378-398 (LIPN…AITV), 420-440 (AIGF…SAAL), 455-475 (LSAI…APLF), and 524-544 (LLST…CVIL). Residues 568–719 (TYKNLRSKSG…YSLSEAVAFA (152 aa)) enclose the STAS domain.

This sequence belongs to the SLC26A/SulP transporter (TC 2.A.53) family. N-glycosylated. In terms of tissue distribution, cartilage and intestine. Expressed in the kidney (at protein level).

It is found in the cell membrane. The protein resides in the apical cell membrane. It carries out the reaction oxalate(in) + sulfate(out) = oxalate(out) + sulfate(in). The catalysed reaction is sulfate(out) + 2 chloride(in) = sulfate(in) + 2 chloride(out). The enzyme catalyses oxalate(out) + 2 chloride(in) = oxalate(in) + 2 chloride(out). It catalyses the reaction bromide(in) + chloride(out) = bromide(out) + chloride(in). It carries out the reaction nitrate(in) + chloride(out) = nitrate(out) + chloride(in). The catalysed reaction is iodide(in) + chloride(out) = iodide(out) + chloride(in). Its function is as follows. Sulfate transporter which mediates sulfate uptake into chondrocytes in order to maintain adequate sulfation of proteoglycans which is needed for cartilage development. Mediates electroneutral anion exchange of sulfate ions for oxalate ions, sulfate and oxalate ions for chloride and/or hydroxyl ions and chloride ions for bromide, iodide and nitrate ions. The coupling of sulfate transport to both hydroxyl and chloride ions likely serves to ensure transport at both acidic pH when most sulfate uptake is mediated by sulfate-hydroxide exchange and alkaline pH when most sulfate uptake is mediated by sulfate-chloride exchange. Essential for chondrocyte proliferation, differentiation and cell size expansion. This Rattus norvegicus (Rat) protein is Sulfate transporter (Slc26a2).